A 60-amino-acid polypeptide reads, in one-letter code: Large ribosomal subunit protein bL32 (60 aa).

It belongs to the bacterial ribosomal protein bL32 family.

The protein is Large ribosomal subunit protein bL32 (rpmF) of Borreliella burgdorferi (strain ATCC 35210 / DSM 4680 / CIP 102532 / B31) (Borrelia burgdorferi).